A 282-amino-acid polypeptide reads, in one-letter code: MSLTDDQASKRQAYRAAKEANRKELKHVKIDDALPNKSSELDLPKKKFYRQRAHSNPFSDHQLEYPLSPAEMDWSKLYPHYYDAATNTMTKKVTVADIGCGYGGLMVELSRELPENLILGMEIRVQVTNYVEDRIIALRTNHAAQKEYQNINVLRGNAMKFLPNFFEKSQLEKMFFCFPDPHFKQRKHKARIITNTLLSEYAYVLKEGGVIYTITDVLDLHNWMVEHLNMHPLFDRLGDEWLDQDPCVRIMRHATEEGKKVARKQGDKFVACFRRLPNPELV.

Residues 1 to 31 (MSLTDDQASKRQAYRAAKEANRKELKHVKID) form a disordered region. The segment covering 16–31 (AAKEANRKELKHVKID) has biased composition (basic and acidic residues). S-adenosyl-L-methionine is bound by residues glycine 99, 122 to 123 (EI), 157 to 158 (NA), and cysteine 177. The active site involves aspartate 180. An S-adenosyl-L-methionine-binding site is contributed by 255–257 (TEE).

This sequence belongs to the class I-like SAM-binding methyltransferase superfamily. TrmB family. As to quaternary structure, forms a complex with TRM82.

The protein localises to the nucleus. The catalysed reaction is guanosine(46) in tRNA + S-adenosyl-L-methionine = N(7)-methylguanosine(46) in tRNA + S-adenosyl-L-homocysteine. It participates in tRNA modification; N(7)-methylguanine-tRNA biosynthesis. In terms of biological role, catalyzes the formation of N(7)-methylguanine at position 46 (m7G46) in tRNA. This chain is tRNA (guanine-N(7)-)-methyltransferase, found in Eremothecium gossypii (strain ATCC 10895 / CBS 109.51 / FGSC 9923 / NRRL Y-1056) (Yeast).